Here is a 1691-residue protein sequence, read N- to C-terminus: Collagen alpha-6(IV) chain (1691 aa).

Positions 1–22 are cleaved as a signal peptide; the sequence is MLINKLWLLLVTLCLTEELAAA. The interval 23–46 is 7S domain; that stretch reads GEKSYGKPCGGQDCSGSCQCFPEK. The segment at 47-1463 is triple-helical region; that stretch reads GARGRPGPIG…FGMPGMPGQS (1417 aa). Disordered regions lie at residues 108–338, 404–473, 486–881, 915–1099, and 1185–1459; these read IPGH…EGQK, GFPG…LGLK, GGVP…KGSP, GIPG…KGRD, and THGT…MPGM. Residue asparagine 127 is glycosylated (N-linked (GlcNAc...) asparagine). Positions 185–197 are enriched in low complexity; the sequence is PQGAPGFPGAVGP. The span at 198 to 213 shows a compositional bias: pro residues; that stretch reads AGPPGLQGPPGPPGPL. Composition is skewed to low complexity over residues 311–320 and 421–431; these read QGPPGQQGKK and GAAGLPGRDGL. 2 stretches are compositionally biased toward pro residues: residues 432–443 and 491–502; these read PGPPGPPGPPSP and TGPPGEPGPPGP. The segment covering 503-512 has biased composition (low complexity); the sequence is WGLIGLPGLK. Positions 515 to 517 match the Cell attachment site motif; the sequence is RGD. Over residues 526 to 541 the composition is skewed to low complexity; that stretch reads PAGAPGLVGPLGPSGP. Residues 560-562 carry the Cell attachment site motif; that stretch reads RGD. Residues 588–599 are compositionally biased toward gly residues; sequence GLPGDGGQGFPG. 4 stretches are compositionally biased toward low complexity: residues 641–652, 660–703, 722–735, and 802–820; these read LPGQQGLPGSKG, PGSY…GSPG, LPGFPGLPGKDGLP, and SPGTPGQVGQPGTPGSSGP. The span at 842 to 851 shows a compositional bias: basic residues; sequence PGKKGTRGKK. Residues 853 to 878 are compositionally biased toward low complexity; sequence PPGSIVKKGLPGLKGLPGNPGLVGLK. A Cell attachment site motif is present at residues 986–988; sequence RGD. The segment covering 1055 to 1068 has biased composition (low complexity); that stretch reads SPGLPGASGLPGLK. The segment covering 1210-1220 has biased composition (gly residues); the sequence is GYPGIGIGAPG. A compositionally biased stretch (low complexity) spans 1234–1253; sequence PGLQGPAGLPGAPGISLPSL. Residues 1275–1284 show a composition bias toward pro residues; the sequence is PAGPPGPPGP. A compositionally biased stretch (polar residues) spans 1360-1371; the sequence is SGLQGDPGQTPT. Low complexity-rich tracts occupy residues 1384–1397 and 1429–1459; these read LPGIDGIPGLTGDP and ALGDPGLPGLQGPPGFEGAPGQQGPFGMPGM. The 225-residue stretch at 1467–1691 folds into the Collagen IV NC1 domain; the sequence is GYTLVKHSQS…SRCQVCMKSL (225 aa). Cystine bridges form between cysteine 1482–cysteine 1571, cysteine 1515–cysteine 1568, cysteine 1527–cysteine 1533, cysteine 1590–cysteine 1687, cysteine 1624–cysteine 1684, and cysteine 1636–cysteine 1643.

It belongs to the type IV collagen family. As to quaternary structure, there are six type IV collagen isoforms, alpha 1(IV)-alpha 6(IV), each of which can form a triple helix structure with 2 other chains to generate type IV collagen network. In terms of processing, prolines at the third position of the tripeptide repeating unit (G-X-Y) are hydroxylated in some or all of the chains. Post-translationally, type IV collagens contain numerous cysteine residues which are involved in inter- and intramolecular disulfide bonding. 12 of these, located in the NC1 domain, are conserved in all known type IV collagens. The trimeric structure of the NC1 domains is stabilized by covalent bonds between Lys and Met residues.

It localises to the secreted. The protein resides in the extracellular space. Its subcellular location is the extracellular matrix. It is found in the basement membrane. Type IV collagen is the major structural component of glomerular basement membranes (GBM), forming a 'chicken-wire' meshwork together with laminins, proteoglycans and entactin/nidogen. The protein is Collagen alpha-6(IV) chain (COL4A6) of Homo sapiens (Human).